The following is a 293-amino-acid chain: uncharacterized protein (293 aa).

This is an uncharacterized protein from Acanthamoeba polyphaga (Amoeba).